Reading from the N-terminus, the 501-residue chain is Cytochrome P450 2J1 (501 aa).

Cys447 contributes to the heme binding site.

Belongs to the cytochrome P450 family. It depends on heme as a cofactor. In terms of tissue distribution, small intestine.

It is found in the endoplasmic reticulum membrane. Its subcellular location is the microsome membrane. It catalyses the reaction an organic molecule + reduced [NADPH--hemoprotein reductase] + O2 = an alcohol + oxidized [NADPH--hemoprotein reductase] + H2O + H(+). In terms of biological role, catalyzes the N-demethylation of benzphetamine to formaldehyde. The protein is Cytochrome P450 2J1 (CYP2J1) of Oryctolagus cuniculus (Rabbit).